The sequence spans 1642 residues: Cholesterol transporter ABCA5 (1642 aa).

Residues 32–52 (SVQEILFPLFFLFWLILISMM) form a helical membrane-spanning segment. The N-linked (GlcNAc...) asparagine glycan is linked to Asn86. The next 6 membrane-spanning stretches (helical) occupy residues 220 to 240 (VILI…AIHI), 264 to 284 (LSWV…MAVI), 297 to 317 (IVIF…ALML), 328 to 348 (GIVE…IILI), 355 to 375 (LVWL…AQVM), and 396 to 416 (LIIT…LAVY). The N-linked (GlcNAc...) asparagine glycan is linked to Asn458. In terms of domain architecture, ABC transporter 1 spans 478–713 (IRISGIQKTY…WGIGYRLSMY (236 aa)). 514-521 (GHSGTGKS) serves as a coordination point for ATP. Helical transmembrane passes span 866–886 (LLLL…HHSF) and 967–987 (VFAA…VNII). A glycan (N-linked (GlcNAc...) asparagine) is linked at Asn996. Transmembrane regions (helical) follow at residues 1021–1041 (LYFQ…YFAM), 1071–1091 (VVDI…LLAF), 1102–1122 (FLAV…FTYI), 1139–1159 (FIYS…FFMG), 1169–1189 (AFCI…FIKI), and 1207–1227 (LSVA…LLQY). Residues 1249-1268 (KSKNRKLPEPPDNEDEDEDV) form a disordered region. The span at 1259–1268 (PDNEDEDEDV) shows a compositional bias: acidic residues. Residues 1290-1533 (IMVSNLHKEY…FGKGYFLEIK (244 aa)) enclose the ABC transporter 2 domain. 1333-1340 (GPNGAGKS) contributes to the ATP binding site.

The protein belongs to the ABC transporter superfamily. ABCA family. N-glycosylated. Ubiquitously expressed. Highly expressed in testis, skeletal muscle, kidney, liver and placenta. Expressed in both the epithelial and mesenchymal compartments, present within the outer root sheath (ORS) of the hair follicle as well as dermal sheath. Expressed in multiple regions of the brain, including the hippocampus, superior frontal and inferior temporal cortices. Strongly expressed in neurons and moderately in microglia, with only weak expression in astrocytes and oligodendrocytes.

Its subcellular location is the golgi apparatus membrane. It is found in the lysosome membrane. The protein localises to the late endosome membrane. It localises to the cell membrane. It carries out the reaction cholesterol(in) + ATP + H2O = cholesterol(out) + ADP + phosphate + H(+). Cholesterol efflux transporter in macrophages that is responsible for APOAI/high-density lipoproteins (HDL) formation at the plasma membrane under high cholesterol levels and participates in reverse cholesterol transport. May play a role in the processing of autolysosomes. The protein is Cholesterol transporter ABCA5 of Homo sapiens (Human).